We begin with the raw amino-acid sequence, 187 residues long: Peptidyl-tRNA hydrolase (187 aa).

TRNA is bound at residue Y15. The active-site Proton acceptor is H20. TRNA contacts are provided by F65, N67, and N113.

Belongs to the PTH family. In terms of assembly, monomer.

The protein resides in the cytoplasm. It catalyses the reaction an N-acyl-L-alpha-aminoacyl-tRNA + H2O = an N-acyl-L-amino acid + a tRNA + H(+). Its function is as follows. Hydrolyzes ribosome-free peptidyl-tRNAs (with 1 or more amino acids incorporated), which drop off the ribosome during protein synthesis, or as a result of ribosome stalling. Catalyzes the release of premature peptidyl moieties from peptidyl-tRNA molecules trapped in stalled 50S ribosomal subunits, and thus maintains levels of free tRNAs and 50S ribosomes. This Methylococcus capsulatus (strain ATCC 33009 / NCIMB 11132 / Bath) protein is Peptidyl-tRNA hydrolase.